Consider the following 272-residue polypeptide: GTP cyclohydrolase FolE2 (272 aa).

The protein belongs to the GTP cyclohydrolase IV family.

It catalyses the reaction GTP + H2O = 7,8-dihydroneopterin 3'-triphosphate + formate + H(+). It participates in cofactor biosynthesis; 7,8-dihydroneopterin triphosphate biosynthesis; 7,8-dihydroneopterin triphosphate from GTP: step 1/1. Its function is as follows. Converts GTP to 7,8-dihydroneopterin triphosphate. In Polynucleobacter asymbioticus (strain DSM 18221 / CIP 109841 / QLW-P1DMWA-1) (Polynucleobacter necessarius subsp. asymbioticus), this protein is GTP cyclohydrolase FolE2.